We begin with the raw amino-acid sequence, 260 residues long: tRNA pseudouridine synthase A (260 aa).

Aspartate 52 acts as the Nucleophile in catalysis. A substrate-binding site is contributed by tyrosine 110.

This sequence belongs to the tRNA pseudouridine synthase TruA family. In terms of assembly, homodimer.

It carries out the reaction uridine(38/39/40) in tRNA = pseudouridine(38/39/40) in tRNA. Functionally, formation of pseudouridine at positions 38, 39 and 40 in the anticodon stem and loop of transfer RNAs. The protein is tRNA pseudouridine synthase A of Thiobacillus denitrificans (strain ATCC 25259 / T1).